The primary structure comprises 208 residues: MAQTELNVSQREGLGKGTARSLRREGLIPAVMYGKGVENCSLVVEPKQLAAIIGSEAGLNSLITLKGEGAFDGKVVILKDMQVDPIRQTPLHVDFQAIDLNAKTHVLVPLVVVGKSEGEKQGGNLQIIRHEVELVCLPANIPANIEVDVTALNIGDALHVQDVQLPEGVEIPQDVNFTVVTVTGRTAEVEEEGAEVVEEGEEAAEAGE.

The protein belongs to the bacterial ribosomal protein bL25 family. CTC subfamily. In terms of assembly, part of the 50S ribosomal subunit; part of the 5S rRNA/L5/L18/L25 subcomplex. Contacts the 5S rRNA. Binds to the 5S rRNA independently of L5 and L18.

In terms of biological role, this is one of the proteins that binds to the 5S RNA in the ribosome where it forms part of the central protuberance. The protein is Large ribosomal subunit protein bL25 of Syntrophotalea carbinolica (strain DSM 2380 / NBRC 103641 / GraBd1) (Pelobacter carbinolicus).